A 271-amino-acid polypeptide reads, in one-letter code: NADPH-dependent 7-cyano-7-deazaguanine reductase (271 aa).

Isoleucine 81–serine 83 provides a ligand contact to substrate. Serine 83 to lysine 84 serves as a coordination point for NADPH. Cysteine 177 (thioimide intermediate) is an active-site residue. The Proton donor role is filled by aspartate 184. Residue histidine 216–glutamate 217 participates in substrate binding. Arginine 245–glycine 246 lines the NADPH pocket.

The protein belongs to the GTP cyclohydrolase I family. QueF type 2 subfamily. In terms of assembly, homodimer.

The protein localises to the cytoplasm. It carries out the reaction 7-aminomethyl-7-carbaguanine + 2 NADP(+) = 7-cyano-7-deazaguanine + 2 NADPH + 3 H(+). The protein operates within tRNA modification; tRNA-queuosine biosynthesis. In terms of biological role, catalyzes the NADPH-dependent reduction of 7-cyano-7-deazaguanine (preQ0) to 7-aminomethyl-7-deazaguanine (preQ1). This is NADPH-dependent 7-cyano-7-deazaguanine reductase from Xanthomonas axonopodis pv. citri (strain 306).